The primary structure comprises 181 residues: CDP-diacylglycerol--glycerol-3-phosphate 3-phosphatidyltransferase (181 aa).

4 helical membrane passes run 8-28, 35-55, 64-84, and 148-168; these read PNYL…TFYI, MLGA…GYIA, FGKM…IIML, and IIYL…LTII.

It belongs to the CDP-alcohol phosphatidyltransferase class-I family.

It localises to the cell membrane. It carries out the reaction a CDP-1,2-diacyl-sn-glycerol + sn-glycerol 3-phosphate = a 1,2-diacyl-sn-glycero-3-phospho-(1'-sn-glycero-3'-phosphate) + CMP + H(+). The protein operates within phospholipid metabolism; phosphatidylglycerol biosynthesis; phosphatidylglycerol from CDP-diacylglycerol: step 1/2. This protein catalyzes the committed step to the synthesis of the acidic phospholipids. The protein is CDP-diacylglycerol--glycerol-3-phosphate 3-phosphatidyltransferase (pgsA) of Rickettsia bellii (strain RML369-C).